A 630-amino-acid chain; its full sequence is 1,4-alpha-glucan branching enzyme GlgB (630 aa).

The active-site Nucleophile is Asp-308. Glu-361 acts as the Proton donor in catalysis.

This sequence belongs to the glycosyl hydrolase 13 family. GlgB subfamily. Monomer.

The catalysed reaction is Transfers a segment of a (1-&gt;4)-alpha-D-glucan chain to a primary hydroxy group in a similar glucan chain.. It functions in the pathway glycan biosynthesis; glycogen biosynthesis. Catalyzes the formation of the alpha-1,6-glucosidic linkages in glycogen by scission of a 1,4-alpha-linked oligosaccharide from growing alpha-1,4-glucan chains and the subsequent attachment of the oligosaccharide to the alpha-1,6 position. The protein is 1,4-alpha-glucan branching enzyme GlgB of Halothermothrix orenii (strain H 168 / OCM 544 / DSM 9562).